A 139-amino-acid polypeptide reads, in one-letter code: ATP synthase epsilon chain (139 aa).

It belongs to the ATPase epsilon chain family. In terms of assembly, F-type ATPases have 2 components, CF(1) - the catalytic core - and CF(0) - the membrane proton channel. CF(1) has five subunits: alpha(3), beta(3), gamma(1), delta(1), epsilon(1). CF(0) has three main subunits: a, b and c.

The protein resides in the cell inner membrane. Its function is as follows. Produces ATP from ADP in the presence of a proton gradient across the membrane. The chain is ATP synthase epsilon chain from Salmonella arizonae (strain ATCC BAA-731 / CDC346-86 / RSK2980).